We begin with the raw amino-acid sequence, 458 residues long: tRNA modification GTPase MnmE (458 aa).

(6S)-5-formyl-5,6,7,8-tetrahydrofolate contacts are provided by Arg26, Glu88, and Arg127. A TrmE-type G domain is found at 224–378 (GLSTAIIGRP…IEDRINQLFF (155 aa)). Residue Asn234 participates in K(+) binding. GTP is bound by residues 234–239 (NVGKSS), 253–259 (TDIAGTT), and 278–281 (DTAG). A Mg(2+)-binding site is contributed by Ser238. Positions 253, 255, and 258 each coordinate K(+). Mg(2+) is bound at residue Thr259. A (6S)-5-formyl-5,6,7,8-tetrahydrofolate-binding site is contributed by Lys458.

Belongs to the TRAFAC class TrmE-Era-EngA-EngB-Septin-like GTPase superfamily. TrmE GTPase family. In terms of assembly, homodimer. Heterotetramer of two MnmE and two MnmG subunits. K(+) is required as a cofactor.

Its subcellular location is the cytoplasm. Its function is as follows. Exhibits a very high intrinsic GTPase hydrolysis rate. Involved in the addition of a carboxymethylaminomethyl (cmnm) group at the wobble position (U34) of certain tRNAs, forming tRNA-cmnm(5)s(2)U34. The chain is tRNA modification GTPase MnmE from Streptococcus pyogenes serotype M5 (strain Manfredo).